The chain runs to 196 residues: Putative tyrosine-protein phosphatase OCA1 (196 aa).

The region spanning 33 to 192 is the Tyrosine-protein phosphatase domain; sequence NFCPVEKQLY…SVQIDPTKMP (160 aa). Cysteine 130 serves as the catalytic Phosphocysteine intermediate.

The protein belongs to the protein-tyrosine phosphatase family.

The protein resides in the cytoplasm. The enzyme catalyses O-phospho-L-tyrosyl-[protein] + H2O = L-tyrosyl-[protein] + phosphate. Putative tyrosine-protein phosphatase required for protection against superoxide stress. In Debaryomyces hansenii (strain ATCC 36239 / CBS 767 / BCRC 21394 / JCM 1990 / NBRC 0083 / IGC 2968) (Yeast), this protein is Putative tyrosine-protein phosphatase OCA1 (OCA1).